The chain runs to 245 residues: Demethylmenaquinone methyltransferase (245 aa).

Residues Thr62, Asp80, 105–106 (DA), and Ser122 each bind S-adenosyl-L-methionine.

The protein belongs to the class I-like SAM-binding methyltransferase superfamily. MenG/UbiE family.

The catalysed reaction is a 2-demethylmenaquinol + S-adenosyl-L-methionine = a menaquinol + S-adenosyl-L-homocysteine + H(+). It functions in the pathway quinol/quinone metabolism; menaquinone biosynthesis; menaquinol from 1,4-dihydroxy-2-naphthoate: step 2/2. Functionally, methyltransferase required for the conversion of demethylmenaquinol (DMKH2) to menaquinol (MKH2). The sequence is that of Demethylmenaquinone methyltransferase from Clavibacter sepedonicus (Clavibacter michiganensis subsp. sepedonicus).